The primary structure comprises 439 residues: 3-phosphoshikimate 1-carboxyvinyltransferase (439 aa).

Residues Lys31, Ser32, and Arg36 each contribute to the 3-phosphoshikimate site. Residue Lys31 coordinates phosphoenolpyruvate. Phosphoenolpyruvate is bound by residues Gly103 and Arg131. The 3-phosphoshikimate site is built by Ser175, Gln177, Asp322, and Lys349. Gln177 lines the phosphoenolpyruvate pocket. The active-site Proton acceptor is the Asp322. Residues Arg353 and Arg397 each contribute to the phosphoenolpyruvate site.

The protein belongs to the EPSP synthase family. As to quaternary structure, monomer.

Its subcellular location is the cytoplasm. It catalyses the reaction 3-phosphoshikimate + phosphoenolpyruvate = 5-O-(1-carboxyvinyl)-3-phosphoshikimate + phosphate. It participates in metabolic intermediate biosynthesis; chorismate biosynthesis; chorismate from D-erythrose 4-phosphate and phosphoenolpyruvate: step 6/7. Functionally, catalyzes the transfer of the enolpyruvyl moiety of phosphoenolpyruvate (PEP) to the 5-hydroxyl of shikimate-3-phosphate (S3P) to produce enolpyruvyl shikimate-3-phosphate and inorganic phosphate. This is 3-phosphoshikimate 1-carboxyvinyltransferase from Clostridium tetani (strain Massachusetts / E88).